Here is a 409-residue protein sequence, read N- to C-terminus: Accessory Sec system protein translocase subunit SecY2 (409 aa).

A run of 10 helical transmembrane segments spans residues 16-36 (ILITFSLIIIFLLGRYVPIPG), 61-81 (LSQVGVFSLGIGPMMTTMILL), 104-124 (VVMLVIAIIQGLAIAISFQYH), 132-152 (LLLATMILVTGAYIISWIGNL), 161-181 (MTILVVVGMLVGQFNNIPLIF), 190-210 (LAIILFLLWTLVAMYLMITFE), 242-262 (GMAFMYVYTLLMFPQYIIILL), 286-306 (GVVIYMILMLVLSVAFTFVNI), 341-361 (LFGTFSGFFMAFLGGVPLLFA), and 374-394 (TGIFMMITGMSFMILDEFQVI).

It belongs to the SecY/SEC61-alpha family. SecY2 subfamily. In terms of assembly, component of the accessory SecA2/SecY2 protein translocase complex required to export cell wall proteins. May form heterotrimers with SecE and SecG subunits.

Its subcellular location is the cell membrane. Its function is as follows. Part of the accessory SecA2/SecY2 system specifically required for export of possible cell wall proteins. The central subunit of a protein translocation channel. This is Accessory Sec system protein translocase subunit SecY2 from Streptococcus agalactiae serotype III (strain NEM316).